We begin with the raw amino-acid sequence, 396 residues long: Probable intron-encoded endonuclease aI3 (396 aa).

The tract at residues 51-90 (TNNTNNNNPADSSSYESRMRAAGNSNSNSNSNSDSNINNT) is disordered. The span at 74 to 90 (NSNSNSNSNSDSNINNT) shows a compositional bias: low complexity.

Belongs to the LAGLIDADG endonuclease family.

The protein resides in the mitochondrion. Its function is as follows. Mitochondrial DNA endonuclease involved in intron homing. This is Probable intron-encoded endonuclease aI3 (aI3) from Kluyveromyces lactis (strain ATCC 8585 / CBS 2359 / DSM 70799 / NBRC 1267 / NRRL Y-1140 / WM37) (Yeast).